The chain runs to 162 residues: uncharacterized protein (162 aa).

This is an uncharacterized protein from Sputnik virophage.